Here is a 370-residue protein sequence, read N- to C-terminus: DNA repair protein RAD51 homolog 2 (370 aa).

109–116 (GPPGIGKS) provides a ligand contact to ATP.

It belongs to the RecA family. RAD51 subfamily. In terms of tissue distribution, preferentially expressed in flower buds and roots.

The protein localises to the nucleus. May be involved in the homologous recombination repair (HRR) pathway of double-stranded DNA breaks arising during DNA replication or induced by DNA-damaging agents. The chain is DNA repair protein RAD51 homolog 2 (RAD51B) from Arabidopsis thaliana (Mouse-ear cress).